Consider the following 651-residue polypeptide: Coiled-coil domain-containing protein 81 (651 aa).

Residues 194–314 (LSSRESFGKR…PKTSPAPACQ (121 aa)) form a disordered region. The residue at position 206 (Ser-206) is a Phosphoserine. 2 stretches are compositionally biased toward basic and acidic residues: residues 212 to 222 (RIEHKETENKP) and 232 to 250 (GENR…KEEG). The span at 265–275 (SISPAKVTSGS) shows a compositional bias: polar residues. Residues Ser-273, Ser-275, Ser-294, and Ser-416 each carry the phosphoserine modification. 2 coiled-coil regions span residues 428–465 (SQSL…EELA) and 539–566 (KRNT…EHLA).

It localises to the cytoplasm. It is found in the cytoskeleton. The protein localises to the microtubule organizing center. The protein resides in the centrosome. This Rattus norvegicus (Rat) protein is Coiled-coil domain-containing protein 81 (Ccdc81).